The primary structure comprises 204 residues: Quinol oxidase subunit 3 (204 aa).

Helical transmembrane passes span 27-47 (FWIFLGAEIVLFSTLFATFFV), 66-86 (LVMIMTFLLLISSFTCGIAVH), 95-115 (GVVIWTIITLLLGAGFVGCEI), 140-160 (LLGTHGTHVTIGIFWIIGILI), and 184-204 (FLDVVWIFIFTGVYLMGLGGL).

Belongs to the cytochrome c oxidase subunit 3 family.

The protein resides in the cell membrane. It carries out the reaction 2 a quinol + O2 = 2 a quinone + 2 H2O. Its function is as follows. Catalyzes quinol oxidation with the concomitant reduction of oxygen to water. Major component for energy conversion during vegetative growth. The polypeptide is Quinol oxidase subunit 3 (qoxC) (Bacillus spizizenii (strain ATCC 23059 / NRRL B-14472 / W23) (Bacillus subtilis subsp. spizizenii)).